The sequence spans 162 residues: Lipoprotein signal peptidase (162 aa).

The next 4 membrane-spanning stretches (helical) occupy residues 9–29 (LCLV…LVAT), 39–59 (VIHG…FGLF), 66–86 (VRKF…LWLY), and 95–115 (VLSF…IDRF). Catalysis depends on residues D122 and D140. Residues 136 to 156 (FNVADSAITIGMVVFVYHVIF) form a helical membrane-spanning segment.

Belongs to the peptidase A8 family.

The protein localises to the cell inner membrane. It catalyses the reaction Release of signal peptides from bacterial membrane prolipoproteins. Hydrolyzes -Xaa-Yaa-Zaa-|-(S,diacylglyceryl)Cys-, in which Xaa is hydrophobic (preferably Leu), and Yaa (Ala or Ser) and Zaa (Gly or Ala) have small, neutral side chains.. Its pathway is protein modification; lipoprotein biosynthesis (signal peptide cleavage). Its function is as follows. This protein specifically catalyzes the removal of signal peptides from prolipoproteins. This chain is Lipoprotein signal peptidase, found in Desulforapulum autotrophicum (strain ATCC 43914 / DSM 3382 / VKM B-1955 / HRM2) (Desulfobacterium autotrophicum).